We begin with the raw amino-acid sequence, 132 residues long: uncharacterized protein (132 aa).

A disordered region spans residues 68-91 (WSRTSPNSSRSSPRSPASMASTSS).

This is an uncharacterized protein from Streptomyces cacaoi.